The chain runs to 614 residues: uncharacterized protein (614 aa).

2 helical membrane passes run 494–516 and 552–574; these read VAYW…GSTL and LLIG…IVHA. The interval 588-614 is disordered; the sequence is AVRPRADKDIQTLTHRDEAEEDQEEDS. The span at 591–605 shows a compositional bias: basic and acidic residues; sequence PRADKDIQTLTHRDE.

The protein resides in the cell membrane. This is an uncharacterized protein from Treponema pallidum (strain Nichols).